The chain runs to 467 residues: Glutamate--tRNA ligase (467 aa).

Residues 9–19 carry the 'HIGH' region motif; the sequence is PSPTGYLHIGG. A 'KMSKS' region motif is present at residues 237 to 241; the sequence is KLSKR. K240 serves as a coordination point for ATP.

Belongs to the class-I aminoacyl-tRNA synthetase family. Glutamate--tRNA ligase type 1 subfamily. In terms of assembly, monomer.

Its subcellular location is the cytoplasm. It carries out the reaction tRNA(Glu) + L-glutamate + ATP = L-glutamyl-tRNA(Glu) + AMP + diphosphate. Its function is as follows. Catalyzes the attachment of glutamate to tRNA(Glu) in a two-step reaction: glutamate is first activated by ATP to form Glu-AMP and then transferred to the acceptor end of tRNA(Glu). This is Glutamate--tRNA ligase from Xylella fastidiosa (strain 9a5c).